A 152-amino-acid polypeptide reads, in one-letter code: Calmodulin-like protein 2 (152 aa).

EF-hand domains follow at residues 1 to 36, 37 to 72, 74 to 109, and 112 to 147; these read MDRG…VGIM, VPEN…MVEE, EEEE…MGLK, and RTLE…GGFA. 18 residues coordinate Ca(2+): Asp14, Asn16, Asp18, Lys20, Glu25, Asp50, Asn52, Asp54, Glu61, Asp87, Asn89, Asp91, Glu98, Asp125, Asp127, Asp129, Met131, and Glu136.

Belongs to the calmodulin family.

Its function is as follows. Potential calcium sensor that is required for pollen tube attraction for ovule fertilization. This chain is Calmodulin-like protein 2 (CML2), found in Arabidopsis thaliana (Mouse-ear cress).